Reading from the N-terminus, the 639-residue chain is Polypeptide N-acetylgalactosaminyltransferase 15 (639 aa).

The Cytoplasmic segment spans residues 1–11; it reads MLLRKRYRHRP. The helical; Signal-anchor for type II membrane protein transmembrane segment at 12 to 34 threads the bilayer; sequence CRLQFLLLLLMLGCVLMMVAMLH. The Lumenal portion of the chain corresponds to 35–639; it reads PPHHTLHQTV…FDQINAVDER (605 aa). A disordered region spans residues 106–155; the sequence is RNQSQGRRGGSYRLIKQPRRQDKEAPKRDWGADEDGEVSEEEELTPFSLD. The N-linked (GlcNAc...) asparagine glycan is linked to N107. Positions 124–136 are enriched in basic and acidic residues; the sequence is RRQDKEAPKRDWG. Acidic residues predominate over residues 137–149; it reads ADEDGEVSEEEEL. 5 cysteine pairs are disulfide-bonded: C181–C412, C403–C482, C517–C536, C562–C575, and C603–C620. Residues 190 to 299 form a catalytic subdomain A region; sequence LPTASVILCF…PGWLEPLLSR (110 aa). The substrate site is built by D231 and R260. D283, H285, and H417 together coordinate Mn(2+). The tract at residues 358-420 is catalytic subdomain B; the sequence is PIRSPVVPGE…PCSRVGHIYQ (63 aa). One can recognise a Ricin B-type lectin domain in the interval 504-631; the sequence is SFSGKLHNTG…GKARQQWRFD (128 aa). N574 is a glycosylation site (N-linked (GlcNAc...) asparagine).

The protein belongs to the glycosyltransferase 2 family. GalNAc-T subfamily. It depends on Mn(2+) as a cofactor. In terms of tissue distribution, widely expressed. Highly expressed in small intestine, placenta, spleen, cerebral cortex and ovary. Expressed at intermediate level in uterus, mammary gland, stomach, cerebellum and whole brain. Weakly expressed in fetal brain, bone marrow, thyroid gland, thymus, heart, skeletal muscle, lung, liver, colon, pancreas, kidney and testis. Not expressed in leukocyte. Expressed in both normal and osteoarthritic cartilage. Expressed at low level in chondrocytes in all zones of both normal and osteoarthritic cartilage.

The protein localises to the golgi apparatus membrane. It carries out the reaction L-seryl-[protein] + UDP-N-acetyl-alpha-D-galactosamine = a 3-O-[N-acetyl-alpha-D-galactosaminyl]-L-seryl-[protein] + UDP + H(+). It catalyses the reaction L-threonyl-[protein] + UDP-N-acetyl-alpha-D-galactosamine = a 3-O-[N-acetyl-alpha-D-galactosaminyl]-L-threonyl-[protein] + UDP + H(+). The protein operates within protein modification; protein glycosylation. Its function is as follows. Catalyzes the initial reaction in O-linked oligosaccharide biosynthesis, the transfer of an N-acetyl-D-galactosamine residue to a serine or threonine residue on the protein receptor. Although it displays a much weaker activity toward all substrates tested compared to GALNT2, it is able to transfer up to seven GalNAc residues to the Muc5AC peptide, suggesting that it can fill vicinal Thr/Ser residues in cooperation with other GALNT proteins. Prefers Muc1a as substrate. The sequence is that of Polypeptide N-acetylgalactosaminyltransferase 15 (GALNT15) from Homo sapiens (Human).